A 71-amino-acid chain; its full sequence is Translational regulator CsrA (71 aa).

Belongs to the CsrA/RsmA family. Homodimer; the beta-strands of each monomer intercalate to form a hydrophobic core, while the alpha-helices form wings that extend away from the core.

The protein localises to the cytoplasm. In terms of biological role, a key translational regulator that binds mRNA to regulate translation initiation and/or mRNA stability. Mediates global changes in gene expression, shifting from rapid growth to stress survival by linking envelope stress, the stringent response and the catabolite repression systems. Usually binds in the 5'-UTR; binding at or near the Shine-Dalgarno sequence prevents ribosome-binding, repressing translation, binding elsewhere in the 5'-UTR can activate translation and/or stabilize the mRNA. Its function is antagonized by small RNA(s). In Pseudoalteromonas atlantica (strain T6c / ATCC BAA-1087), this protein is Translational regulator CsrA.